A 337-amino-acid chain; its full sequence is tRNA N6-adenosine threonylcarbamoyltransferase (337 aa).

Residues histidine 111 and histidine 115 each contribute to the Fe cation site. Substrate-binding positions include 134–138, aspartate 167, glycine 180, and asparagine 272; that span reads LVSGG. Residue aspartate 300 coordinates Fe cation.

This sequence belongs to the KAE1 / TsaD family. Fe(2+) is required as a cofactor.

Its subcellular location is the cytoplasm. It carries out the reaction L-threonylcarbamoyladenylate + adenosine(37) in tRNA = N(6)-L-threonylcarbamoyladenosine(37) in tRNA + AMP + H(+). Its function is as follows. Required for the formation of a threonylcarbamoyl group on adenosine at position 37 (t(6)A37) in tRNAs that read codons beginning with adenine. Is involved in the transfer of the threonylcarbamoyl moiety of threonylcarbamoyl-AMP (TC-AMP) to the N6 group of A37, together with TsaE and TsaB. TsaD likely plays a direct catalytic role in this reaction. The chain is tRNA N6-adenosine threonylcarbamoyltransferase from Shewanella woodyi (strain ATCC 51908 / MS32).